A 550-amino-acid polypeptide reads, in one-letter code: Aldehyde dehydrogenase family 3 member I1, chloroplastic (550 aa).

Residues 1 to 59 (MTKLLEINHIQTLCFAKGFSPARLNVATSPFRISRRGGGGYCSNACIPYRLKFTCYATL) constitute a chloroplast transit peptide. 259-264 (GGARVA) contributes to the NAD(+) binding site. Glu-281 (proton acceptor) is an active-site residue. Residue Cys-316 is the Nucleophile of the active site.

Belongs to the aldehyde dehydrogenase family. Homodimer and homomultimer.

It is found in the plastid. Its subcellular location is the chloroplast. It carries out the reaction an aldehyde + NAD(+) + H2O = a carboxylate + NADH + 2 H(+). With respect to regulation, thiol-based regulation. Inactivation after dimerization under oxidizing conditions. In terms of biological role, involved in oxidative stress tolerance by detoxifying reactive aldehydes derived from lipid peroxidation. Medium- to long-chain saturated aldehydes are preferred substrates, while the short-chain aldehyde propanal is a weak substrate. Can use both NAD(+) and NADP(+), but the coenzyme preference is substrate dependent. In Arabidopsis thaliana (Mouse-ear cress), this protein is Aldehyde dehydrogenase family 3 member I1, chloroplastic (ALDH3I1).